The following is a 356-amino-acid chain: Syntaxin-7A (356 aa).

The Cytoplasmic portion of the chain corresponds to methionine 1–cysteine 333. 2 stretches are compositionally biased toward low complexity: residues asparagine 32–asparagine 74 and asparagine 207–glutamine 224. Disordered regions lie at residues asparagine 32 to tyrosine 88 and glutamate 187 to glutamine 247. The segment covering glutamate 233–arginine 244 has biased composition (basic and acidic residues). One can recognise a t-SNARE coiled-coil homology domain in the interval asparagine 259 to alanine 321. A helical; Anchor for type IV membrane protein transmembrane segment spans residues tryptophan 334–leucine 354. Residues arginine 355–lysine 356 lie on the Vesicular side of the membrane.

It belongs to the syntaxin family. In terms of assembly, component of the SNARE complex composed of syn7A, syn8A, vamp7A and vti1A. Interacts with nsfA, snpA and snpC.

It localises to the endosome membrane. Its function is as follows. Involved in the targeting and/or fusion of transport vesicles to their target membrane during transport of proteins from the early endosome to the lysosome. Required for fusion of late endosomes with lysosomes and homotypic lysosomal fusion. May be involved in protein trafficking from the plasma membrane to the early endosome (EE) as well as in homotypic fusion of endocytic organelles. The polypeptide is Syntaxin-7A (Dictyostelium discoideum (Social amoeba)).